A 98-amino-acid chain; its full sequence is NADH-ubiquinone oxidoreductase chain 4L (98 aa).

3 consecutive transmembrane segments (helical) span residues 1-21 (MSVVYINIFLAFILSFMGLLV), 30-50 (LLCLEGMMLSLFVMMTITVLT), and 61-81 (IILLVFAACEAALGLSLLVMI).

This sequence belongs to the complex I subunit 4L family. As to quaternary structure, core subunit of respiratory chain NADH dehydrogenase (Complex I) which is composed of 45 different subunits.

Its subcellular location is the mitochondrion inner membrane. It carries out the reaction a ubiquinone + NADH + 5 H(+)(in) = a ubiquinol + NAD(+) + 4 H(+)(out). In terms of biological role, core subunit of the mitochondrial membrane respiratory chain NADH dehydrogenase (Complex I) which catalyzes electron transfer from NADH through the respiratory chain, using ubiquinone as an electron acceptor. Part of the enzyme membrane arm which is embedded in the lipid bilayer and involved in proton translocation. The chain is NADH-ubiquinone oxidoreductase chain 4L (MT-ND4L) from Lontra canadensis (North American river otter).